A 407-amino-acid polypeptide reads, in one-letter code: Flagellar calcium-binding protein TB-44A (407 aa).

Residues 1–27 are disordered; the sequence is MGCSASKDTTNSKDGAASKGGKDGKTT. The segment at 25–399 is 2 X 186 AA almost perfect repeats; it reads KTTADRKVAW…LQVCGDPDGE (375 aa). One can recognise an EF-hand 1 domain in the interval 48–83; sequence ESKSRRIELFKRFDTNGTGKLSFREVLDGCYSILKL. Ca(2+) is bound by residues aspartate 61, asparagine 63, threonine 65, lysine 67, and glutamate 72. The tract at residues 110–121 is ancestral calcium site 2; sequence GVGEEDLVEFLE. EF-hand domains follow at residues 130–165, 167–202, and 237–272; these read YDIF…WKEW, VDIT…KKLQ, and ESKS…ILKL. Ca(2+) is bound by residues aspartate 143, aspartate 145, serine 147, glutamate 154, aspartate 180, asparagine 182, serine 184, glutamate 191, aspartate 250, asparagine 252, threonine 254, lysine 256, and glutamate 261. The segment at 299–310 is ancestral calcium site 6; that stretch reads GVGEEDLVEFLE. 2 EF-hand domains span residues 319–354 and 356–391; these read YDIF…WKEW and VDIT…KKLQ. Ca(2+) contacts are provided by aspartate 332, aspartate 334, serine 336, glutamate 343, aspartate 369, asparagine 371, serine 373, and glutamate 380.

The protein belongs to the calflagin family.

Its subcellular location is the cell projection. The protein localises to the cilium. It localises to the flagellum. In terms of biological role, may contribute to the rapid motility of the trypanosomes, playing a role either in flagellar structure or in calcium metabolism. Could alternate between a GDP-bound inactive form to a calcium/GTP-bound active form. In Trypanosoma brucei brucei, this protein is Flagellar calcium-binding protein TB-44A.